We begin with the raw amino-acid sequence, 328 residues long: Tetraacyldisaccharide 4'-kinase (328 aa).

Residue 55–62 (TAGGNGKT) participates in ATP binding.

It belongs to the LpxK family.

It catalyses the reaction a lipid A disaccharide + ATP = a lipid IVA + ADP + H(+). The protein operates within glycolipid biosynthesis; lipid IV(A) biosynthesis; lipid IV(A) from (3R)-3-hydroxytetradecanoyl-[acyl-carrier-protein] and UDP-N-acetyl-alpha-D-glucosamine: step 6/6. Functionally, transfers the gamma-phosphate of ATP to the 4'-position of a tetraacyldisaccharide 1-phosphate intermediate (termed DS-1-P) to form tetraacyldisaccharide 1,4'-bis-phosphate (lipid IVA). This is Tetraacyldisaccharide 4'-kinase from Escherichia coli (strain 55989 / EAEC).